The following is a 434-amino-acid chain: Enolase A (434 aa).

Substrate is bound by residues histidine 160 and glutamate 169. Glutamate 212 (proton donor) is an active-site residue. Mg(2+) is bound by residues aspartate 247, glutamate 296, and aspartate 321. Substrate-binding residues include glutamate 296 and aspartate 321. Lysine 346 acts as the Proton acceptor in catalysis. Substrate-binding positions include 373–376 and lysine 397; that span reads SHRS.

Belongs to the enolase family. As to quaternary structure, homodimer. Mg(2+) serves as cofactor.

It localises to the cytoplasm. It carries out the reaction (2R)-2-phosphoglycerate = phosphoenolpyruvate + H2O. Its pathway is carbohydrate degradation; glycolysis; pyruvate from D-glyceraldehyde 3-phosphate: step 4/5. The polypeptide is Enolase A (enoA) (Dictyostelium discoideum (Social amoeba)).